The sequence spans 115 residues: Large ribosomal subunit protein bL20 (115 aa).

This sequence belongs to the bacterial ribosomal protein bL20 family.

Its function is as follows. Binds directly to 23S ribosomal RNA and is necessary for the in vitro assembly process of the 50S ribosomal subunit. It is not involved in the protein synthesizing functions of that subunit. The polypeptide is Large ribosomal subunit protein bL20 (Synechococcus sp. (strain CC9902)).